The sequence spans 523 residues: DNA primase (523 aa).

Residues 37-61 (CPFHAEKTPSFFVNPLQGYFYCFGC) form a CHC2-type zinc finger. Residues 259–340 (KSVILVEGYI…NVSVVRMDFG (82 aa)) enclose the Toprim domain. Mg(2+) is bound by residues Glu265, Asp309, and Asp311.

It belongs to the DnaG primase family. Monomer. Interacts with DnaB. Requires Zn(2+) as cofactor. It depends on Mg(2+) as a cofactor.

The catalysed reaction is ssDNA + n NTP = ssDNA/pppN(pN)n-1 hybrid + (n-1) diphosphate.. Functionally, RNA polymerase that catalyzes the synthesis of short RNA molecules used as primers for DNA polymerase during DNA replication. This is DNA primase from Borreliella burgdorferi (strain ATCC 35210 / DSM 4680 / CIP 102532 / B31) (Borrelia burgdorferi).